A 214-amino-acid polypeptide reads, in one-letter code: A-type ATP synthase subunit D (214 aa).

It belongs to the V-ATPase D subunit family. As to quaternary structure, has multiple subunits with at least A(3), B(3), C, D, E, F, H, I and proteolipid K(x).

The protein resides in the cell membrane. In terms of biological role, component of the A-type ATP synthase that produces ATP from ADP in the presence of a proton gradient across the membrane. The chain is A-type ATP synthase subunit D from Pyrococcus abyssi (strain GE5 / Orsay).